The primary structure comprises 314 residues: Homoserine O-acetyltransferase (314 aa).

Catalysis depends on C142, which acts as the Acyl-thioester intermediate. 2 residues coordinate substrate: K163 and S192. Catalysis depends on H235, which acts as the Proton acceptor. E237 is a catalytic residue. Position 249 (R249) interacts with substrate.

The protein belongs to the MetA family.

The protein localises to the cytoplasm. The catalysed reaction is L-homoserine + acetyl-CoA = O-acetyl-L-homoserine + CoA. It participates in amino-acid biosynthesis; L-methionine biosynthesis via de novo pathway; O-acetyl-L-homoserine from L-homoserine: step 1/1. Functionally, transfers an acetyl group from acetyl-CoA to L-homoserine, forming acetyl-L-homoserine. This is Homoserine O-acetyltransferase from Azobacteroides pseudotrichonymphae genomovar. CFP2.